The primary structure comprises 166 residues: Lipoprotein signal peptidase (166 aa).

4 helical membrane passes run 9 to 29 (ASGA…FDQL), 45 to 65 (ALTS…FGFL), 71 to 91 (WQRW…CFLL), and 100 to 120 (FSLS…DRLV). Residues Asp126 and Asp144 contribute to the active site. Residues 135–155 (WHFPAFNLADSAITVGAVLLV) traverse the membrane as a helical segment.

It belongs to the peptidase A8 family.

It is found in the cell inner membrane. It catalyses the reaction Release of signal peptides from bacterial membrane prolipoproteins. Hydrolyzes -Xaa-Yaa-Zaa-|-(S,diacylglyceryl)Cys-, in which Xaa is hydrophobic (preferably Leu), and Yaa (Ala or Ser) and Zaa (Gly or Ala) have small, neutral side chains.. Its pathway is protein modification; lipoprotein biosynthesis (signal peptide cleavage). This protein specifically catalyzes the removal of signal peptides from prolipoproteins. This is Lipoprotein signal peptidase from Burkholderia ambifaria (strain MC40-6).